We begin with the raw amino-acid sequence, 366 residues long: Protein lifeguard 1 (366 aa).

Residues 1–141 (MSHEKSFLVS…GPPSYYDNQD (141 aa)) form a disordered region. Composition is skewed to pro residues over residues 14–44 (YPPP…PFQP) and 67–109 (GPYP…PNPY). Helical transmembrane passes span 160-180 (VFLV…VFTF), 192-212 (VWTY…LSCC), 223-243 (LVAL…IASF), 248-268 (AVIM…IFSM), 278-298 (VGVL…CIFI), 302-322 (VLEI…LAVD), and 341-361 (FAAL…LTII).

Belongs to the BI1 family. LFG subfamily.

It is found in the membrane. In terms of biological role, potential apoptotic regulator. The polypeptide is Protein lifeguard 1 (GRINA) (Bos taurus (Bovine)).